A 572-amino-acid chain; its full sequence is Chromatin assembly factor 1 subunit B (572 aa).

7 WD repeats span residues 11 to 54 (HNKE…DGKA), 64 to 103 (RHTK…EPEQ), 127 to 166 (GHLE…KISI), 169 to 208 (EHKS…VAFN), 228 to 279 (FHDD…RPIA), 301 to 347 (RPVA…PFGY), and 351 to 392 (IHYH…IPLK). Threonine 401 carries the phosphothreonine modification. The segment at 403–572 (DTAKKAKNQT…LAPDDSSKTV (170 aa)) is disordered. Positions 411-430 (QTHQGSSPGSRSVEGTPSNR) are enriched in polar residues. Phosphoserine is present on serine 416. Threonine 426 carries the post-translational modification Phosphothreonine. The segment covering 431–452 (TQDPSSPCTTPSPTTQSPAPSA) has biased composition (low complexity). Serine 436 carries the phosphoserine modification. Threonine 440 is subject to Phosphothreonine. Residues serine 456 and serine 465 each carry the phosphoserine modification. Lysine 501 carries the N6-acetyllysine modification. 2 positions are modified to phosphothreonine: threonine 502 and threonine 510. The span at 511-529 (PLKTDTVPNPQPNSGTAPS) shows a compositional bias: polar residues. Positions 546 to 559 (PELKRPRLEEREGD) are enriched in basic and acidic residues.

This sequence belongs to the WD repeat HIR1 family. In terms of assembly, subunit of the CAF-1 complex that contains RBBP4, CHAF1B and CHAF1A. CHAF1A binds directly to CHAF1B. Interacts with histones H3.1, H3.2 and H3.1t.

Its subcellular location is the nucleus. It localises to the cytoplasm. Functionally, acts as a component of the histone chaperone complex chromatin assembly factor 1 (CAF-1), which assembles histone octamers onto DNA during replication and repair. CAF-1 performs the first step of the nucleosome assembly process, bringing newly synthesized histones H3 and H4 to replicating DNA; histones H2A/H2B can bind to this chromatin precursor subsequent to DNA replication to complete the histone octamer. The polypeptide is Chromatin assembly factor 1 subunit B (Mus musculus (Mouse)).